The chain runs to 435 residues: Eukaryotic peptide chain release factor subunit 1-2 (435 aa).

Ala-2 bears the N-acetylalanine mark.

This sequence belongs to the eukaryotic release factor 1 family. As to quaternary structure, heterodimer of two subunits, one of which binds GTP. Interacts with OR.

It is found in the cytoplasm. Directs the termination of nascent peptide synthesis (translation) in response to the termination codons UAA, UAG and UGA. Modulates plant growth and development. This Brassica oleracea var. botrytis (Cauliflower) protein is Eukaryotic peptide chain release factor subunit 1-2.